Consider the following 189-residue polypeptide: MRKIGIIGGTFDPPHYGHLLIANEVYHALNLEEVWFLPNQIPPHKQGRNITSVESRLHMLELATEAEEHFSICLEELSRKGPSYTYDTMLQLTKKYPDVQFHFIIGGDMVEYLPKWYNIEALLNLVTFVGVARPGYTLHTPYKITTVEIPEFAVSSSLLRERYKEKKTCKYLLPEKVQVYIERNGLYES.

This sequence belongs to the NadD family.

It carries out the reaction nicotinate beta-D-ribonucleotide + ATP + H(+) = deamido-NAD(+) + diphosphate. It functions in the pathway cofactor biosynthesis; NAD(+) biosynthesis; deamido-NAD(+) from nicotinate D-ribonucleotide: step 1/1. In terms of biological role, catalyzes the reversible adenylation of nicotinate mononucleotide (NaMN) to nicotinic acid adenine dinucleotide (NaAD). The chain is Probable nicotinate-nucleotide adenylyltransferase from Bacillus cereus (strain B4264).